The primary structure comprises 115 residues: MNMLTALLVNITLSMLLIIVAFWFFQLNLYTEKANPYECGFDPMGSARLPFSMKFFLVAITFLLFDLEIALLLPLPWAIQMYNTNIMMLTAFILISVLALGLAYEWLQKGLEWTE.

The next 3 helical transmembrane spans lie at Thr5–Phe25, Phe55–Leu75, and Ile86–Trp106.

This sequence belongs to the complex I subunit 3 family. As to quaternary structure, core subunit of respiratory chain NADH dehydrogenase (Complex I) which is composed of 45 different subunits. Interacts with TMEM186. Interacts with TMEM242.

The protein localises to the mitochondrion inner membrane. The catalysed reaction is a ubiquinone + NADH + 5 H(+)(in) = a ubiquinol + NAD(+) + 4 H(+)(out). Its function is as follows. Core subunit of the mitochondrial membrane respiratory chain NADH dehydrogenase (Complex I) which catalyzes electron transfer from NADH through the respiratory chain, using ubiquinone as an electron acceptor. Essential for the catalytic activity of complex I. The polypeptide is NADH-ubiquinone oxidoreductase chain 3 (Peromyscus sejugis (Santa Cruz mouse)).